The chain runs to 86 residues: Small ribosomal subunit protein uS17 (86 aa).

This sequence belongs to the universal ribosomal protein uS17 family. Part of the 30S ribosomal subunit.

Its function is as follows. One of the primary rRNA binding proteins, it binds specifically to the 5'-end of 16S ribosomal RNA. The chain is Small ribosomal subunit protein uS17 from Desulfitobacterium hafniense (strain DSM 10664 / DCB-2).